The primary structure comprises 311 residues: Methionyl-tRNA formyltransferase (311 aa).

Ser-110–Pro-113 provides a ligand contact to (6S)-5,6,7,8-tetrahydrofolate.

Belongs to the Fmt family.

The catalysed reaction is L-methionyl-tRNA(fMet) + (6R)-10-formyltetrahydrofolate = N-formyl-L-methionyl-tRNA(fMet) + (6S)-5,6,7,8-tetrahydrofolate + H(+). Its function is as follows. Attaches a formyl group to the free amino group of methionyl-tRNA(fMet). The formyl group appears to play a dual role in the initiator identity of N-formylmethionyl-tRNA by promoting its recognition by IF2 and preventing the misappropriation of this tRNA by the elongation apparatus. The sequence is that of Methionyl-tRNA formyltransferase from Streptococcus sanguinis (strain SK36).